Here is a 335-residue protein sequence, read N- to C-terminus: L-lactate dehydrogenase B chain (335 aa).

Residues 29-57 (GQVG…VEDK) and Arg-99 contribute to the NAD(+) site. Arg-106, Asn-138, and Arg-169 together coordinate substrate. Asn-138 lines the NAD(+) pocket. His-193 functions as the Proton acceptor in the catalytic mechanism. Thr-248 is a substrate binding site.

The protein belongs to the LDH/MDH superfamily. LDH family. Homotetramer.

Its subcellular location is the cytoplasm. The enzyme catalyses (S)-lactate + NAD(+) = pyruvate + NADH + H(+). It functions in the pathway fermentation; pyruvate fermentation to lactate; (S)-lactate from pyruvate: step 1/1. Its function is as follows. Interconverts simultaneously and stereospecifically pyruvate and lactate with concomitant interconversion of NADH and NAD(+). In Sceloporus undulatus (Eastern fence lizard), this protein is L-lactate dehydrogenase B chain (LDHB).